The chain runs to 1456 residues: Ig-like and fibronectin type-III domain-containing protein C27B7.7 (1456 aa).

A signal peptide spans 1 to 16 (MISLSLVLLLLFGVRC). Fibronectin type-III domains follow at residues 24-128 (NDDS…SINT) and 132-227 (IPKA…TNST). 5 N-linked (GlcNAc...) asparagine glycosylation sites follow: Asn64, Asn146, Asn164, Asn198, and Asn225. Positions 236–322 (PDEEYTADPQ…DAGDSSKEVN (87 aa)) constitute an Ig-like 1 domain. Residues Cys254 and Cys308 are joined by a disulfide bond. Residues 328–426 (PGSPPSEITL…VAMERDTQPI (99 aa)) form the Fibronectin type-III 3 domain. Asn471, Asn497, and Asn517 each carry an N-linked (GlcNAc...) asparagine glycan. Fibronectin type-III domains are found at residues 531-631 (APTQ…TLNG), 636-736 (PPDN…TAYS), and 737-846 (EVPI…WFRT). N-linked (GlcNAc...) asparagine glycosylation is found at Asn658, Asn691, and Asn692. The 108-residue stretch at 841-948 (PRWFRTGHGK…GSSSASVEIR (108 aa)) folds into the Ig-like 2 domain. An intrachain disulfide couples Cys877 to Cys932. Asn893, Asn898, Asn969, Asn1091, Asn1120, Asn1133, Asn1151, Asn1207, Asn1268, Asn1277, Asn1298, Asn1350, Asn1357, and Asn1382 each carry an N-linked (GlcNAc...) asparagine glycan. A Fibronectin type-III 7 domain is found at 955 to 1050 (PPENIILTAY…SCISDVLYET (96 aa)). Fibronectin type-III domains follow at residues 1148 to 1234 (APTN…TPNG), 1236 to 1343 (PKTA…ISFD), and 1347 to 1438 (VIDN…SSPS). The tract at residues 1419 to 1456 (LGRESPPSEEIDLEFISSPSPTPIISGSRRKVIKEPPL) is disordered. Low complexity predominate over residues 1434-1445 (ISSPSPTPIISG).

Its subcellular location is the secreted. This Caenorhabditis elegans protein is Ig-like and fibronectin type-III domain-containing protein C27B7.7.